The chain runs to 55 residues: uncharacterized protein (55 aa).

This is an uncharacterized protein from Thermoproteus tenax (TTV1).